We begin with the raw amino-acid sequence, 467 residues long: Glycosyl hydrolase family 109 protein (467 aa).

Positions 1-31 form a signal peptide, tat-type signal; sequence MKNFNRRAFLKAAGATTAGLVTSGLILPASA. NAD(+) contacts are provided by residues 66–67, D88, 137–140, 157–158, and N186; these read QR, WQWH, and EV. Substrate contacts are provided by residues Y215, R234, 246–249, and Y328; that span reads YPTH. Y246 is a binding site for NAD(+).

It belongs to the Gfo/Idh/MocA family. Glycosyl hydrolase 109 subfamily. The cofactor is NAD(+). Predicted to be exported by the Tat system. The position of the signal peptide cleavage has not been experimentally proven.

Glycosidase. The chain is Glycosyl hydrolase family 109 protein from Shewanella woodyi (strain ATCC 51908 / MS32).